The chain runs to 310 residues: Ribosomal protein uL3 glutamine methyltransferase (310 aa).

This sequence belongs to the protein N5-glutamine methyltransferase family. PrmB subfamily.

The catalysed reaction is L-glutaminyl-[ribosomal protein uL3] + S-adenosyl-L-methionine = N(5)-methyl-L-glutaminyl-[ribosomal protein uL3] + S-adenosyl-L-homocysteine + H(+). Its function is as follows. Methylates large ribosomal subunit protein uL3 on a specific glutamine residue. The chain is Ribosomal protein uL3 glutamine methyltransferase from Vibrio anguillarum (strain ATCC 68554 / 775) (Listonella anguillarum).